A 312-amino-acid chain; its full sequence is 26S proteasome non-ATPase regulatory subunit 14 (312 aa).

The 136-residue stretch at 33-168 folds into the MPN domain; that stretch reads VYISSLALLK…IDAFRTINPQ (136 aa). Zn(2+)-binding residues include histidine 115, histidine 117, and aspartate 128. The short motif at 115–128 is the JAMM motif element; it reads HSHPGFGCWLSGVD.

The protein belongs to the peptidase M67A family. PSMD14 subfamily. In terms of assembly, component of the 19S regulatory cap of the 26S proteasome.

Functionally, metalloprotease component of the 26S proteasome that specifically cleaves 'Lys-63'-linked polyubiquitin chains. The 26S proteasome is involved in the ATP-dependent degradation of ubiquitinated proteins. The function of the 'Lys-63'-specific deubiquitination of the proteasome is unclear. The chain is 26S proteasome non-ATPase regulatory subunit 14 (rpn-11) from Caenorhabditis elegans.